Here is a 280-residue protein sequence, read N- to C-terminus: Gem-associated protein 2 (280 aa).

Residues 1–39 (MRRAELAGLKTMAWVPAESAVEELMPRLLPVEPCDLTEG) are may play a minor inhibitory role in snRNA binding to 5Sm (SNRPD1, SNRPD2, SNRPE, SNRPF and SNRPG) during snRNP assembly by inserting into the RNA binding pocket of 5Sm. Phosphoserine occurs at positions 81 and 166.

Belongs to the gemin-2 family. As to quaternary structure, monomer. Part of the core SMN complex that contains SMN1, GEMIN2/SIP1, DDX20/GEMIN3, GEMIN4, GEMIN5, GEMIN6, GEMIN7, GEMIN8 and STRAP/UNRIP. Part of the SMN-Sm complex that contains SMN1, GEMIN2/SIP1, DDX20/GEMIN3, GEMIN4, GEMIN5, GEMIN6, GEMIN7, GEMIN8, STRAP/UNRIP and the Sm proteins SNRPB, SNRPD1, SNRPD2, SNRPD3, SNRPE, SNRPF and SNRPG. Interacts with GEMIN5; the interaction is direct. Interacts (via C-terminus) with SMN1; the interaction is direct. Interacts with SNRPD1; the interaction is direct. Interacts with SNRPD2; the interaction is direct. Interacts (via N-terminus) with SNRPF; the interaction is direct. Interacts (via N-terminus) with SNRPE; the interaction is direct. Interacts (via N-terminus) with SNRPG; the interaction is direct.

It localises to the nucleus. It is found in the gem. Its subcellular location is the cytoplasm. In terms of biological role, the SMN complex catalyzes the assembly of small nuclear ribonucleoproteins (snRNPs), the building blocks of the spliceosome, and thereby plays an important role in the splicing of cellular pre-mRNAs. Most spliceosomal snRNPs contain a common set of Sm proteins SNRPB, SNRPD1, SNRPD2, SNRPD3, SNRPE, SNRPF and SNRPG that assemble in a heptameric protein ring on the Sm site of the small nuclear RNA to form the core snRNP (Sm core). In the cytosol, the Sm proteins SNRPD1, SNRPD2, SNRPE, SNRPF and SNRPG (5Sm) are trapped in an inactive 6S pICln-Sm complex by the chaperone CLNS1A that controls the assembly of the core snRNP. To assemble core snRNPs, the SMN complex accepts the trapped 5Sm proteins from CLNS1A. Binding of snRNA inside 5Sm ultimately triggers eviction of the SMN complex, thereby allowing binding of SNRPD3 and SNRPB to complete assembly of the core snRNP. Within the SMN complex, GEMIN2 constrains the conformation of 5Sm, thereby promoting 5Sm binding to snRNA containing the snRNP code (a nonameric Sm site and a 3'-adjacent stem-loop), thus preventing progression of assembly until a cognate substrate is bound. The chain is Gem-associated protein 2 from Homo sapiens (Human).